The following is a 464-amino-acid chain: GPI mannosyltransferase 2 (464 aa).

The Cytoplasmic segment spans residues 1–70; sequence MYYIGHPSYY…MTRSGYNYFK (70 aa). A helical membrane pass occupies residues 71 to 91; it reads GICVCTFLLSTILYLGIAVIM. At 92-166 the chain is on the lumenal side; it reads SHLCVFDDTA…ISFLAFRSKD (75 aa). Residues Asn108 and Asn139 are each glycosylated (N-linked (GlcNAc...) asparagine). The chain crosses the membrane as a helical span at residues 167-187; the sequence is VVLLGIVSCFASIFFHAIACY. The Cytoplasmic portion of the chain corresponds to 188–219; that stretch reads ALYLLTKSIFSNQKMTAYTVIFYCFSPSGIYM. The helical transmembrane segment at 220–240 threads the bilayer; it reads SVGYTESLFAAFSFLGLLLFI. The Lumenal portion of the chain corresponds to 241–260; sequence KKQQYPAAFLWSLATLIRSN. Residues 261–281 traverse the membrane as a helical segment; the sequence is GIFWCIFFGMPAIGTLKISLE. The Cytoplasmic segment spans residues 282-289; the sequence is RLQLTFMQ. Residues 290–309 form a helical membrane-spanning segment; the sequence is VSQLVGYGTKCLIILVPFFY. Residues 310–356 lie on the Lumenal side of the membrane; that stretch reads NQYLGFKLFCPGVAWCNKSLPLIYPAVQEKYWNVGFLRYWTLNNIPN. A glycan (N-linked (GlcNAc...) asparagine) is linked at Asn326. Residues 357–377 traverse the membrane as a helical segment; the sequence is FLFALLSIIPILFALFYSISG. The Cytoplasmic segment spans residues 378 to 388; the sequence is STLHSFRSIKS. A helical membrane pass occupies residues 389 to 409; that stretch reads HLVLSALYLYIGCFHMHTQVL. Over 410–440 the chain is Lumenal; that stretch reads NRMSSALPLLYWSMAHATLYAKSRNLKAFGH. Residues 441–461 form a helical membrane-spanning segment; it reads CILFVWIVYTVIQAGLYGSFL. The Cytoplasmic segment spans residues 462 to 464; it reads PPA.

Belongs to the PIGV family. In terms of assembly, part of the GPI mannosyltransferase 2 complex composed of gpi18 and C167.09.

It localises to the endoplasmic reticulum membrane. It participates in glycolipid biosynthesis; glycosylphosphatidylinositol-anchor biosynthesis. Its function is as follows. Mannosyltransferase involved in glycosylphosphatidylinositol-anchor biosynthesis. Responsible for the transfer of the second mannose to the glycosylphosphatidylinositol during GPI precursor assembly. The polypeptide is GPI mannosyltransferase 2 (gpi18) (Schizosaccharomyces pombe (strain 972 / ATCC 24843) (Fission yeast)).